The following is a 213-amino-acid chain: Type II restriction enzyme BamHI (213 aa).

4 residues coordinate Mg(2+): E77, D94, E111, and F112. The Proton acceptor role is filled by E113.

As to quaternary structure, homodimer. It depends on Mg(2+) as a cofactor.

It catalyses the reaction Endonucleolytic cleavage of DNA to give specific double-stranded fragments with terminal 5'-phosphates.. A P subtype restriction enzyme that recognizes the double-stranded sequence 5'-GGATCC-3' and cleaves after G-1. In Bacillus amyloliquefaciens (Bacillus velezensis), this protein is Type II restriction enzyme BamHI.